Consider the following 575-residue polypeptide: Cytokinin dehydrogenase 1 (575 aa).

The N-terminal stretch at 1 to 31 is a signal peptide; the sequence is MGLTSSLRFHRQNNKTFLGIFMILVLSCIPG. N-linked (GlcNAc...) asparagine glycosylation is found at Asn14, Asn38, and Asn115. Positions 84–262 constitute an FAD-binding PCMH-type domain; the sequence is YQLPPLAILH…TRARISLEPA (179 aa). FAD-binding residues include Ala120, Gly122, and Gly124. His125 carries the post-translational modification Pros-8alpha-FAD histidine. Residues Ser126, Gln130, Asp186, Thr191, Ser197, Ile201, and Ile252 each coordinate FAD. 4 N-linked (GlcNAc...) asparagine glycosylation sites follow: Asn303, Asn318, Asn437, and Asn467. FAD is bound by residues Tyr498 and Gln536.

This sequence belongs to the oxygen-dependent FAD-linked oxidoreductase family. It depends on FAD as a cofactor. As to expression, expressed in shoot apexes, lateral shoot meristems, growing tissues of young flowers, and weakly at the root-hypocotyl junction.

It is found in the vacuole. The catalysed reaction is N(6)-dimethylallyladenine + A + H2O = 3-methyl-2-butenal + adenine + AH2. Its function is as follows. Catalyzes the oxidation of cytokinins, a family of N(6)-substituted adenine derivatives that are plant hormones, where the substituent is an isopentenyl group. Catalyzes in vitro the oxidation of various types of cytokinin nucleotides that are known as direct products of cytokinin biosynthesis. Promotes adventitious root initiation downstream of MYC2-dependent jasmonate signaling. Cytokinin degraded by CKX1 is required for cell division in the female gametophyte by modulating the expression of cell cycle genes. The polypeptide is Cytokinin dehydrogenase 1 (CKX1) (Arabidopsis thaliana (Mouse-ear cress)).